The chain runs to 360 residues: Phospho-N-acetylmuramoyl-pentapeptide-transferase (360 aa).

A run of 10 helical transmembrane segments spans residues 25–45, 74–94, 97–117, 132–152, 168–188, 199–219, 236–256, 263–283, 288–308, and 338–358; these read RGILGVLTALVLSLWMGPWLI, MGGALILSAIGISTLLWADLA, YVWVVLAVTLLFGAIGWVDDY, WKYFWQSVFGLGAAIFLYMTA, IEIPLGIGFVILTYFVIVGSS, GLAIMPTVMVGGGLGIFCYLS, SGELIVFCGALIGAGLGFLWF, VFMGDVGALALGAALGTIAVI, VVLFIMGGVFVMETLSVMIQV, and VIVRFWIITVILVLVGLATLK.

The protein belongs to the glycosyltransferase 4 family. MraY subfamily. Requires Mg(2+) as cofactor.

The protein localises to the cell inner membrane. The catalysed reaction is UDP-N-acetyl-alpha-D-muramoyl-L-alanyl-gamma-D-glutamyl-meso-2,6-diaminopimeloyl-D-alanyl-D-alanine + di-trans,octa-cis-undecaprenyl phosphate = di-trans,octa-cis-undecaprenyl diphospho-N-acetyl-alpha-D-muramoyl-L-alanyl-D-glutamyl-meso-2,6-diaminopimeloyl-D-alanyl-D-alanine + UMP. The protein operates within cell wall biogenesis; peptidoglycan biosynthesis. Functionally, catalyzes the initial step of the lipid cycle reactions in the biosynthesis of the cell wall peptidoglycan: transfers peptidoglycan precursor phospho-MurNAc-pentapeptide from UDP-MurNAc-pentapeptide onto the lipid carrier undecaprenyl phosphate, yielding undecaprenyl-pyrophosphoryl-MurNAc-pentapeptide, known as lipid I. This is Phospho-N-acetylmuramoyl-pentapeptide-transferase from Stutzerimonas stutzeri (strain A1501) (Pseudomonas stutzeri).